The chain runs to 187 residues: Ribosome-recycling factor (187 aa).

This sequence belongs to the RRF family.

The protein resides in the cytoplasm. In terms of biological role, responsible for the release of ribosomes from messenger RNA at the termination of protein biosynthesis. May increase the efficiency of translation by recycling ribosomes from one round of translation to another. The protein is Ribosome-recycling factor of Mycoplasmopsis pulmonis (strain UAB CTIP) (Mycoplasma pulmonis).